Here is a 1744-residue protein sequence, read N- to C-terminus: MNNTHHHTNGYRTEKPKNEEDLEDPYANLSDFYKNHPAARNEACSSASNGGSKSVKMEPKVEKNEEFEEYIGDPVRLEDMEPFARPSLRDDAPLSSILHPDLDGIDPRIFFKDFNPNKTLRFSRLFAQNIKHTSRAEIWWASRTFSKHQRKKEPEEPLADDVIVGAKKLKLNIIEKVPRVMLADDEEERMRRPILTDAEEMAKKNEEGTVVQPWRTGPAKIWYDMMNLPMTSQAVNYGFKLKKSPQKVSIRSGKPLNYRTPDDLPSTSSGPAPNSAPFLDKVEVIDKSCEASTSEDILLPYQVIEWENDVILDGEEVKDQLLEEFSNGRGCGWIPTQYTRTYEHFVYAANNNAFEQMFDGKSAPINLTGPDSAILPTPGHSIFPSAPCDLDILPWETNIIWDADAMPSTLEPIDFLVDFQDDPLIYGMPEDRRHDEGPDHHHHHHHHRKDGQYTKKSKMILGQVQQRQKQEEDEQMESTMAQFTDNDPFNLSNDDYYVPKATSKTLSNNSLLIQHSTPATNIATHFFPTHPSAFRLRYWHRTPFTRRIVRHWQPMRFQPIQTPVKHQQRVAAMREAMRQAQGGGEVFYMRDVQDLSGKDETLVMIEYSEEHPVILSQPGMASKMKNYFKRRQANDSEPTFTFGELAFSHQIPFLGQLQPGQSLQSIENMLYRAPIYLHKRQNTDFLLIRSMNQWYIRPLPSIFVAGQQCPLYEVPSPNSKRATVFVRDFLFAFIYRLFWASDSSPRRLKMDDVRNAFPHYAESNIRKRLKMCSTFVRQGSETYWSLKPDFRLPSKEEVLSMVTPEMCCAQYSMMAAEQRLKDAGYGEKYFFTPENDEGSEDEVTIEDEIKCAPWNTTRAFLASQREKCLLDQTGIADPTGCGQGFSYVRVSQKPHKDENATPVPKKLVTGTNADLRKLPLKEAKQICRGYGVKEEEISALTRWEIIDVIRTLSTQAAKATKDGEIIAVSGMARFARGNTRFSSADMQEKYRKHCQRIFDQQNQTLANTDPISTDDDSTDADSDNEELASRLESMLEANKGKKNISMSEKAKIDFETEEKEREDLKRMIHGTTNQVEKGEKKEEGEVTAEEKKSASQFGEDVAMSASKISGITANQQLKIYRTCKGPDGKDVTRIEIVTRPQLIEAYTRIRMTRDDTFIQVYAQMDEQYKEEKRKKKRRLQDQIRRMKKNEEKAAHKVQKMTEKKVKPIKPPNPNLQKMRCSACHAYGHMKTNRNCPLYGKDPLTPLKEEDEGSTIMTSVSSASLVAPDAVQVDGTKVKFNLNFAEIRKEQNREEKLKRKLAKMAEAAVRERQMAHLMEYGGGASSSGGAGGGGSGIGGSTGGGITDNDDDDRFSQISGTSSFLNGPPGAIRGGNRNSSVSGSKRRSSMMPEEDYLQGPLKVAHRARADPKVVMSSMLTDIVNELKMISGSDAFVTPVNSKKVVDYYNIIKNPISLQEIKKKISEQSYLLRKDFLDDIKLMFDNSRMYNGDNNILTLTAQQMLQLAGKRMIEREQKFIGLEKQINPLLDTNDLIGFSYLLGEIVQKMKNIPKSALFHTRVDPKKIPAYYLKISDPMDLSIMEQKSKSQEYKSIDEFLKDAEKIYTNSVVFNGAESVYSLKAKEMFEMAEMLVKDQMDTLGELERNINPSAINDAAAAQRGLAMDSDDHMDEMEDHPTEEEEEDDDDEIMDDDMDIDATGYSYDHDDNVAVGQIFNDLAMSDSDEDERAEDVKRPANGDDNLLDSF.

Disordered regions lie at residues 1–65 (MNNT…EKNE), 248–275 (VSIR…APNS), 429–488 (PEDR…DNDP), 1001–1024 (QNQT…DSDN), 1071–1098 (TTNQ…SQFG), and 1186–1213 (MKKN…PPNP). Over residues 43-52 (ACSSASNGGS) the composition is skewed to polar residues. The span at 55–64 (VKMEPKVEKN) shows a compositional bias: basic and acidic residues. The span at 429-439 (PEDRRHDEGPD) shows a compositional bias: basic and acidic residues. A compositionally biased stretch (basic residues) spans 440–449 (HHHHHHHHRK). The segment covering 477–488 (ESTMAQFTDNDP) has biased composition (polar residues). Over residues 1012–1024 (STDDDSTDADSDN) the composition is skewed to acidic residues. 3 coiled-coil regions span residues 1019-1080 (DADS…KGEK), 1161-1204 (YAQM…TEKK), and 1282-1314 (NFAE…RQMA). Composition is skewed to basic and acidic residues over residues 1076–1093 (EKGE…EKKS) and 1186–1205 (MKKN…EKKV). Residues 1319–1344 (YGGGASSSGGAGGGGSGIGGSTGGGI) are compositionally biased toward gly residues. A disordered region spans residues 1319 to 1391 (YGGGASSSGG…SKRRSSMMPE (73 aa)). Residues 1354 to 1363 (SQISGTSSFL) show a composition bias toward polar residues. Residues 1372–1381 (GGNRNSSVSG) are compositionally biased toward low complexity. The Nuclear localization signal motif lies at 1379–1386 (VSGSKRRS). 2 Bromo domains span residues 1404–1512 (RARA…MIER) and 1537–1634 (YLLG…VKDQ). The span at 1666 to 1694 (DHMDEMEDHPTEEEEEDDDDEIMDDDMDI) shows a compositional bias: acidic residues. 2 disordered regions span residues 1666–1702 (DHMD…YSYD) and 1714–1744 (NDLA…LDSF).

The protein belongs to the TAF1 family. Component of the TFIID basal transcription factor complex, composed of TATA-box-binding protein tbp-1, and a number of TBP-associated factors (TAFs).

It is found in the nucleus. Its function is as follows. The TFIID basal transcription factor complex plays a major role in the initiation of RNA polymerase II (Pol II)-dependent transcription. TFIID recognizes and binds promoters via its subunit tbp-1, a TATA-box-binding protein, and promotes assembly of the pre-initiation complex (PIC). The TFIID complex consists of tbp-1 and TBP-associated factors (TAFs), including taf-1. May regulate RNA polymerase II activity and thereby may control transcription initiation by RNA polymerase II. Required for early embryonic development. Essential for embryonic transcription of several genes. In Caenorhabditis elegans, this protein is Transcription initiation factor TFIID subunit 1.